A 180-amino-acid polypeptide reads, in one-letter code: Sec-independent protein translocase protein TatB (180 aa).

A helical transmembrane segment spans residues 1 to 21 (MFDIGWSELLVIGVVALIAIG). The disordered stretch occupies residues 95 to 180 (IEGVDKPVES…AERLKDAKAS (86 aa)). The span at 103 to 123 (ESQPAASAAPETSATVEAPAT) shows a compositional bias: low complexity. The span at 170–180 (EAERLKDAKAS) shows a compositional bias: basic and acidic residues.

Belongs to the TatB family. As to quaternary structure, the Tat system comprises two distinct complexes: a TatABC complex, containing multiple copies of TatA, TatB and TatC subunits, and a separate TatA complex, containing only TatA subunits. Substrates initially bind to the TatABC complex, which probably triggers association of the separate TatA complex to form the active translocon.

Its subcellular location is the cell inner membrane. Its function is as follows. Part of the twin-arginine translocation (Tat) system that transports large folded proteins containing a characteristic twin-arginine motif in their signal peptide across membranes. Together with TatC, TatB is part of a receptor directly interacting with Tat signal peptides. TatB may form an oligomeric binding site that transiently accommodates folded Tat precursor proteins before their translocation. In Bradyrhizobium sp. (strain BTAi1 / ATCC BAA-1182), this protein is Sec-independent protein translocase protein TatB.